The chain runs to 269 residues: Ribosomal RNA small subunit methyltransferase A (269 aa).

Residues N18, L20, G45, E66, D91, and N112 each contribute to the S-adenosyl-L-methionine site.

The protein belongs to the class I-like SAM-binding methyltransferase superfamily. rRNA adenine N(6)-methyltransferase family. RsmA subfamily.

Its subcellular location is the cytoplasm. It carries out the reaction adenosine(1518)/adenosine(1519) in 16S rRNA + 4 S-adenosyl-L-methionine = N(6)-dimethyladenosine(1518)/N(6)-dimethyladenosine(1519) in 16S rRNA + 4 S-adenosyl-L-homocysteine + 4 H(+). Its function is as follows. Specifically dimethylates two adjacent adenosines (A1518 and A1519) in the loop of a conserved hairpin near the 3'-end of 16S rRNA in the 30S particle. May play a critical role in biogenesis of 30S subunits. In Vibrio parahaemolyticus serotype O3:K6 (strain RIMD 2210633), this protein is Ribosomal RNA small subunit methyltransferase A.